The sequence spans 404 residues: Tryptophan synthase beta chain (404 aa).

Residue Lys-91 is modified to N6-(pyridoxal phosphate)lysine.

The protein belongs to the TrpB family. Tetramer of two alpha and two beta chains. The cofactor is pyridoxal 5'-phosphate.

The enzyme catalyses (1S,2R)-1-C-(indol-3-yl)glycerol 3-phosphate + L-serine = D-glyceraldehyde 3-phosphate + L-tryptophan + H2O. It participates in amino-acid biosynthesis; L-tryptophan biosynthesis; L-tryptophan from chorismate: step 5/5. Its function is as follows. The beta subunit is responsible for the synthesis of L-tryptophan from indole and L-serine. In Clavibacter michiganensis subsp. michiganensis (strain NCPPB 382), this protein is Tryptophan synthase beta chain.